Here is a 550-residue protein sequence, read N- to C-terminus: Probable acyl-activating enzyme 9 (550 aa).

Belongs to the ATP-dependent AMP-binding enzyme family. Expressed in leaves, flowers and developing seeds.

Functionally, may act as an acid--thiol ligase that activates carboxylic acids by forming acyl-CoAs. The sequence is that of Probable acyl-activating enzyme 9 (AEE9) from Arabidopsis thaliana (Mouse-ear cress).